A 463-amino-acid chain; its full sequence is Fumarate hydratase class II (463 aa).

Substrate contacts are provided by residues 98-100, 129-132, 139-141, and threonine 187; these read SGT, HPND, and SSN. Histidine 188 (proton donor/acceptor) is an active-site residue. Serine 318 is an active-site residue. Substrate-binding positions include serine 319 and 324-326; that span reads KVN.

Belongs to the class-II fumarase/aspartase family. Fumarase subfamily. Homotetramer.

The protein resides in the cytoplasm. It carries out the reaction (S)-malate = fumarate + H2O. It participates in carbohydrate metabolism; tricarboxylic acid cycle; (S)-malate from fumarate: step 1/1. Its function is as follows. Involved in the TCA cycle. Catalyzes the stereospecific interconversion of fumarate to L-malate. In Brucella melitensis biotype 1 (strain ATCC 23456 / CCUG 17765 / NCTC 10094 / 16M), this protein is Fumarate hydratase class II.